The primary structure comprises 222 residues: 3-dehydroquinate dehydratase (222 aa).

3-dehydroquinate-binding positions include 29-31 and Arg55; that span reads ELR. Catalysis depends on His112, which acts as the Proton donor/acceptor. The active-site Schiff-base intermediate with substrate is Lys139. 3-dehydroquinate is bound by residues Arg178, Ser199, and Gln203.

It belongs to the type-I 3-dehydroquinase family. As to quaternary structure, homodimer.

The enzyme catalyses 3-dehydroquinate = 3-dehydroshikimate + H2O. Its pathway is metabolic intermediate biosynthesis; chorismate biosynthesis; chorismate from D-erythrose 4-phosphate and phosphoenolpyruvate: step 3/7. Functionally, involved in the third step of the chorismate pathway, which leads to the biosynthesis of aromatic amino acids. Catalyzes the cis-dehydration of 3-dehydroquinate (DHQ) and introduces the first double bond of the aromatic ring to yield 3-dehydroshikimate. The protein is 3-dehydroquinate dehydratase of Dehalococcoides mccartyi (strain ATCC BAA-2266 / KCTC 15142 / 195) (Dehalococcoides ethenogenes (strain 195)).